The following is a 161-amino-acid chain: Alpha-crystallin A chain (161 aa).

Methionine 1 is subject to N-acetylmethionine. The required for complex formation with BFSP1 and BFSP2 stretch occupies residues 1 to 53 (MDVTIQHPWFKRALGPFYHNRLFDQFFGEGLFEYDLLPFQSLFRTVLDSGISE). A deamidated glutamine; partial mark is found at glutamine 6 and glutamine 40. One can recognise a sHSP domain in the interval 41-150 (SLFRTVLDSG…SHSERAIPVS (110 aa)). Lysine 87 bears the N6-acetyllysine mark. Residue histidine 88 coordinates Zn(2+). At asparagine 89 the chain carries Deamidated asparagine; partial. The Zn(2+) site is built by glutamate 90 and histidine 95. Position 110 is a phosphoserine (serine 110). Asparagine 111 is modified (deamidated asparagine; partial). Cysteine 119 and cysteine 130 are disulfide-bonded. Glutamine 135 bears the Deamidated glutamine; partial mark. The interval 135–161 (QSGMDASHSERAIPVSREEKASSAPNS) is disordered. Basic and acidic residues predominate over residues 141-155 (SHSERAIPVSREEKA). Histidine 142 serves as a coordination point for Zn(2+). Serine 150 carries O-linked (GlcNAc) serine glycosylation.

Belongs to the small heat shock protein (HSP20) family. As to quaternary structure, heteromer composed of three CRYAA and one CRYAB subunits. Inter-subunit bridging via zinc ions enhances stability, which is crucial as there is no protein turn over in the lens. Can also form homodimers and homotetramers (dimers of dimers) which serve as the building blocks of homooligomers. Within homooligomers, the zinc-binding motif is created from residues of 3 different molecules. His-88 and Glu-90 from one molecule are ligands of the zinc ion, and His-95 and His-142 residues from additional molecules complete the site with tetrahedral coordination geometry. Part of a complex required for lens intermediate filament formation composed of BFSP1, BFSP2 and CRYAA. Undergoes age-dependent proteolytical cleavage at the C-terminus.

The protein resides in the cytoplasm. It localises to the nucleus. Contributes to the transparency and refractive index of the lens. In its oxidized form (absence of intramolecular disulfide bond), acts as a chaperone, preventing aggregation of various proteins under a wide range of stress conditions. Required for the correct formation of lens intermediate filaments as part of a complex composed of BFSP1, BFSP2 and CRYAA. The polypeptide is Alpha-crystallin A chain (CRYAA) (Trichechus inunguis (Amazon manatee)).